The chain runs to 421 residues: Serine hydroxymethyltransferase (421 aa).

Residues leucine 121 and 125–127 contribute to the (6S)-5,6,7,8-tetrahydrofolate site; that span reads GHL. Lysine 229 carries the N6-(pyridoxal phosphate)lysine modification.

This sequence belongs to the SHMT family. Homodimer. It depends on pyridoxal 5'-phosphate as a cofactor.

The protein resides in the cytoplasm. It catalyses the reaction (6R)-5,10-methylene-5,6,7,8-tetrahydrofolate + glycine + H2O = (6S)-5,6,7,8-tetrahydrofolate + L-serine. Its pathway is one-carbon metabolism; tetrahydrofolate interconversion. The protein operates within amino-acid biosynthesis; glycine biosynthesis; glycine from L-serine: step 1/1. Catalyzes the reversible interconversion of serine and glycine with tetrahydrofolate (THF) serving as the one-carbon carrier. This reaction serves as the major source of one-carbon groups required for the biosynthesis of purines, thymidylate, methionine, and other important biomolecules. Also exhibits THF-independent aldolase activity toward beta-hydroxyamino acids, producing glycine and aldehydes, via a retro-aldol mechanism. This is Serine hydroxymethyltransferase from Haemophilus influenzae (strain 86-028NP).